Reading from the N-terminus, the 225-residue chain is Orotate phosphoribosyltransferase (225 aa).

5-phospho-alpha-D-ribose 1-diphosphate contacts are provided by residues Lys-26, 73-74 (YK), Arg-100, Lys-101, Lys-104, His-106, and 127-135 (EDVTTAGTS). The orotate site is built by Thr-131 and Arg-160.

It belongs to the purine/pyrimidine phosphoribosyltransferase family. PyrE subfamily. Homodimer. Mg(2+) serves as cofactor.

The enzyme catalyses orotidine 5'-phosphate + diphosphate = orotate + 5-phospho-alpha-D-ribose 1-diphosphate. Its pathway is pyrimidine metabolism; UMP biosynthesis via de novo pathway; UMP from orotate: step 1/2. In terms of biological role, catalyzes the transfer of a ribosyl phosphate group from 5-phosphoribose 1-diphosphate to orotate, leading to the formation of orotidine monophosphate (OMP). In Lachnoclostridium phytofermentans (strain ATCC 700394 / DSM 18823 / ISDg) (Clostridium phytofermentans), this protein is Orotate phosphoribosyltransferase.